Reading from the N-terminus, the 295-residue chain is Probable aspartoacylase (295 aa).

Residues histidine 13 and glutamate 16 each contribute to the Zn(2+) site. Substrate is bound by residues arginine 54 and 61–62; that span reads NR. Histidine 100 is a Zn(2+) binding site. Substrate is bound by residues glutamate 158 and tyrosine 268.

It belongs to the AspA/AstE family. Aspartoacylase subfamily. Zn(2+) serves as cofactor.

It carries out the reaction an N-acyl-L-aspartate + H2O = a carboxylate + L-aspartate. The polypeptide is Probable aspartoacylase (Prochlorococcus marinus subsp. pastoris (strain CCMP1986 / NIES-2087 / MED4)).